Reading from the N-terminus, the 189-residue chain is GMP synthase [glutamine-hydrolyzing] subunit A (189 aa).

A Glutamine amidotransferase type-1 domain is found at 5-189 (KILVVNNYGQ…MNFFEVCDLY (185 aa)). C79 acts as the Nucleophile in catalysis. Catalysis depends on residues H166 and E168.

As to quaternary structure, heterodimer composed of a glutamine amidotransferase subunit (A) and a GMP-binding subunit (B).

The catalysed reaction is XMP + L-glutamine + ATP + H2O = GMP + L-glutamate + AMP + diphosphate + 2 H(+). Its pathway is purine metabolism; GMP biosynthesis; GMP from XMP (L-Gln route): step 1/1. In terms of biological role, catalyzes the synthesis of GMP from XMP. This Methanosarcina mazei (strain ATCC BAA-159 / DSM 3647 / Goe1 / Go1 / JCM 11833 / OCM 88) (Methanosarcina frisia) protein is GMP synthase [glutamine-hydrolyzing] subunit A.